Consider the following 302-residue polypeptide: Monopolin complex subunit MAM1 (302 aa).

Disordered stretches follow at residues 53–83 and 257–276; these read YHKE…QNNV and TSEN…SKGK. Residues 257–268 are compositionally biased toward polar residues; sequence TSENPFSSSPNT.

Component of the monopolin complex composed of at least CSM1, LRS4 and MAM1. The complex associates with the kinetochore during late pachytene. Phosphorylated by CDC5. This phosphorylation is required for the location to the kinetochores during late pachytene.

It localises to the nucleus. In terms of biological role, component of the monopolin complex which promotes monoorientation during meiosis I, required for chromosome segregation during meiosis. The polypeptide is Monopolin complex subunit MAM1 (MAM1) (Saccharomyces cerevisiae (strain ATCC 204508 / S288c) (Baker's yeast)).